A 162-amino-acid polypeptide reads, in one-letter code: Crossover junction endodeoxyribonuclease RuvC (162 aa).

Active-site residues include aspartate 7, glutamate 67, and aspartate 140. Mg(2+)-binding residues include aspartate 7, glutamate 67, and aspartate 140.

This sequence belongs to the RuvC family. Homodimer which binds Holliday junction (HJ) DNA. The HJ becomes 2-fold symmetrical on binding to RuvC with unstacked arms; it has a different conformation from HJ DNA in complex with RuvA. In the full resolvosome a probable DNA-RuvA(4)-RuvB(12)-RuvC(2) complex forms which resolves the HJ. Requires Mg(2+) as cofactor.

The protein localises to the cytoplasm. The catalysed reaction is Endonucleolytic cleavage at a junction such as a reciprocal single-stranded crossover between two homologous DNA duplexes (Holliday junction).. In terms of biological role, the RuvA-RuvB-RuvC complex processes Holliday junction (HJ) DNA during genetic recombination and DNA repair. Endonuclease that resolves HJ intermediates. Cleaves cruciform DNA by making single-stranded nicks across the HJ at symmetrical positions within the homologous arms, yielding a 5'-phosphate and a 3'-hydroxyl group; requires a central core of homology in the junction. The consensus cleavage sequence is 5'-(A/T)TT(C/G)-3'. Cleavage occurs on the 3'-side of the TT dinucleotide at the point of strand exchange. HJ branch migration catalyzed by RuvA-RuvB allows RuvC to scan DNA until it finds its consensus sequence, where it cleaves and resolves the cruciform DNA. This chain is Crossover junction endodeoxyribonuclease RuvC, found in Pseudothermotoga lettingae (strain ATCC BAA-301 / DSM 14385 / NBRC 107922 / TMO) (Thermotoga lettingae).